The following is a 273-amino-acid chain: Putative pyruvate, phosphate dikinase regulatory protein (273 aa).

ADP is bound at residue 153-160 (GVSRTSKT).

The protein belongs to the pyruvate, phosphate/water dikinase regulatory protein family. PDRP subfamily.

The enzyme catalyses N(tele)-phospho-L-histidyl/L-threonyl-[pyruvate, phosphate dikinase] + ADP = N(tele)-phospho-L-histidyl/O-phospho-L-threonyl-[pyruvate, phosphate dikinase] + AMP + H(+). It catalyses the reaction N(tele)-phospho-L-histidyl/O-phospho-L-threonyl-[pyruvate, phosphate dikinase] + phosphate + H(+) = N(tele)-phospho-L-histidyl/L-threonyl-[pyruvate, phosphate dikinase] + diphosphate. Bifunctional serine/threonine kinase and phosphorylase involved in the regulation of the pyruvate, phosphate dikinase (PPDK) by catalyzing its phosphorylation/dephosphorylation. The sequence is that of Putative pyruvate, phosphate dikinase regulatory protein from Rhizobium meliloti (strain 1021) (Ensifer meliloti).